The chain runs to 399 residues: Tryptophan synthase beta chain (399 aa).

Lysine 92 is subject to N6-(pyridoxal phosphate)lysine.

It belongs to the TrpB family. In terms of assembly, tetramer of two alpha and two beta chains. Pyridoxal 5'-phosphate serves as cofactor.

It carries out the reaction (1S,2R)-1-C-(indol-3-yl)glycerol 3-phosphate + L-serine = D-glyceraldehyde 3-phosphate + L-tryptophan + H2O. It participates in amino-acid biosynthesis; L-tryptophan biosynthesis; L-tryptophan from chorismate: step 5/5. In terms of biological role, the beta subunit is responsible for the synthesis of L-tryptophan from indole and L-serine. This Bordetella pertussis (strain Tohama I / ATCC BAA-589 / NCTC 13251) protein is Tryptophan synthase beta chain.